We begin with the raw amino-acid sequence, 416 residues long: Tumor necrosis factor receptor superfamily member 19 (416 aa).

The N-terminal stretch at 1–29 is a signal peptide; sequence MALKVLPLHRTVLFAAILFLLHLACKVSC. The Extracellular portion of the chain corresponds to 30–170; the sequence is ETGDCRQQEF…TVSSPRDTAL (141 aa). TNFR-Cys repeat units follow at residues 33–72 and 74–114; these read DCRQ…DAQC and PCRP…DAVC. Disulfide bonds link Cys34/Cys46, Cys49/Cys62, Cys52/Cys72, Cys75/Cys89, Cys92/Cys106, Cys95/Cys114, Cys117/Cys135, and Cys138/Cys149. Asn105 is a glycosylation site (N-linked (GlcNAc...) asparagine). A TNFR-Cys 3; truncated repeat occupies 116 to 149; sequence DCLPGFYRKTKLVGFQDMECVPCGDPPPPYEPHC. A helical membrane pass occupies residues 171 to 191; it reads AAVICSALATVLLALLILCVI. At 192–416 the chain is on the cytoplasmic side; the sequence is YCKRQFMEKK…LAMPTAFQDA (225 aa). A disordered region spans residues 321–416; sequence LCDSYPELTG…LAMPTAFQDA (96 aa). Polar residues-rich tracts occupy residues 331-351, 360-370, and 381-396; these read EDTN…SSGG, LESSGNVSEST, and VWEQ…TPSQ.

In terms of assembly, associates with TRAF1, TRAF2, TRAF3 and TRAF5. Interacts with LINGO1. As to expression, highly expressed in adult brain, and in embryos from day 11-17, but not earlier. Detected in embryonic brain and epithelium, and at lower levels in adult heart, lung and liver. In neonatal mice, mainly in hair follicles and neuron-like cells in the cerebellum, but not in the skin epidermis. Isoform 3 was found in embryonic day 17.5 skin but not in brain and liver.

Its subcellular location is the cell membrane. The protein localises to the secreted. In terms of biological role, can mediate activation of c-Jun and NF-kappa-B. May promote caspase-independent cell death. Isoform 2 and isoform 3 may act as decoy receptors. This is Tumor necrosis factor receptor superfamily member 19 (Tnfrsf19) from Mus musculus (Mouse).